The chain runs to 187 residues: Phosphatidylethanolamine-binding protein 1 (187 aa).

Residues serine 6 and serine 13 each carry the phosphoserine modification. The residue at position 42 (threonine 42) is a Phosphothreonine. A phosphoserine mark is found at serine 52, serine 54, serine 98, and serine 153. The segment at 93–134 is interaction with RAF1; that stretch reads KGNDISSGTVLSDYVGSGPPKGTGLHRYVWLVYEQDRPLKCD.

This sequence belongs to the phosphatidylethanolamine-binding protein family. Has a tendency to form dimers by disulfide cross-linking. Interacts with RAF1 and this interaction is enhanced if RAF1 is phosphorylated on residues 'Ser-338', 'Ser-339', 'Tyr-340' and 'Tyr-341'. Interacts with ALOX15; in response to IL13/interleukin-13, prevents the interaction of PEBP1 with RAF1 to activate the ERK signaling cascade.

It is found in the cytoplasm. Binds ATP, opioids and phosphatidylethanolamine. Has lower affinity for phosphatidylinositol and phosphatidylcholine. Serine protease inhibitor which inhibits thrombin, neuropsin and chymotrypsin but not trypsin, tissue type plasminogen activator and elastase. Inhibits the kinase activity of RAF1 by inhibiting its activation and by dissociating the RAF1/MEK complex and acting as a competitive inhibitor of MEK phosphorylation. Functionally, HCNP may be involved in the function of the presynaptic cholinergic neurons of the central nervous system. HCNP increases the production of choline acetyltransferase but not acetylcholinesterase. Seems to be mediated by a specific receptor. This chain is Phosphatidylethanolamine-binding protein 1 (PEBP1), found in Pongo abelii (Sumatran orangutan).